The following is a 738-amino-acid chain: Putative cyclic nucleotide-gated ion channel 7 (738 aa).

The Cytoplasmic portion of the chain corresponds to 1 to 104 (MYKSQYISGQ…DKTLLVWNRL (104 aa)). A helical membrane pass occupies residues 105–125 (FVISCILAVSVDPLFFYLPIV). Over 126–139 (DNSGSSCIGIDTKL) the chain is Extracellular. Residues 140–160 (AVTTTTLRTIVDVFYLTRMAL) form a helical membrane-spanning segment. The Cytoplasmic segment spans residues 161 to 193 (QFRTAYIAPSSRVFGRGELVIDPAKIAERYLTR). The chain crosses the membrane as a helical span at residues 194–214 (YFVVDFLAVLPLPQIAVWKFL). The Extracellular segment spans residues 215-227 (HGSKGSDVLPTKT). A helical transmembrane segment spans residues 228–248 (ALLNIVIVQYIPRFVRFIPLT). Topologically, residues 249–268 (SELKKTAGAFAEGAWAGAAY) are cytoplasmic. A helical transmembrane segment spans residues 269-289 (YLLWYMLASHITGAFWYMLSV). Over 290–395 (ERNDTCWRFA…GQGLQTSTFP (106 aa)) the chain is Extracellular. The chain crosses the membrane as a helical span at residues 396–416 (GEVLFSIAIAIAGLLLFALLI). Over 417–738 (GNMQTYLQSL…KPPEPDFDAE (322 aa)) the chain is Cytoplasmic. Residues 502–632 (LFAN…TFRF) and Glu573 contribute to the a nucleoside 3',5'-cyclic phosphate site. The segment at 618-633 (FRRLHSRQVQQTFRFY) is calmodulin-binding. Residues 638-667 (RTWASCFIQAAWRRYSRRKNAELRRIEEKE) enclose the IQ domain. Disordered stretches follow at residues 671–693 (GYEDEYDDESDKRPMVITRSESS) and 715–738 (LRSSESSKTLINLQKPPEPDFDAE).

It belongs to the cyclic nucleotide-gated cation channel (TC 1.A.1.5) family. As to quaternary structure, homotetramer or heterotetramer.

The protein localises to the cell membrane. Functionally, putative cyclic nucleotide-gated ion channel. This Arabidopsis thaliana (Mouse-ear cress) protein is Putative cyclic nucleotide-gated ion channel 7 (CNGC7).